The primary structure comprises 147 residues: Hemoglobin subunit beta-1/2 (147 aa).

Val2 is subject to N-acetylvaline. One can recognise a Globin domain in the interval 3-147; that stretch reads HLSSEEKSAV…VANALAHKYH (145 aa). Residue Thr13 is modified to Phosphothreonine. At Ser45 the chain carries Phosphoserine. Position 60 is an N6-acetyllysine (Lys60). His64 provides a ligand contact to heme b. Lys83 carries the post-translational modification N6-acetyllysine. His93 is a heme b binding site. An S-nitrosocysteine modification is found at Cys94. Lys145 is subject to N6-acetyllysine.

This sequence belongs to the globin family. As to quaternary structure, heterotetramer of two alpha chains and two beta chains. Red blood cells.

Involved in oxygen transport from the lung to the various peripheral tissues. The sequence is that of Hemoglobin subunit beta-1/2 (HBB1) from Oryctolagus cuniculus (Rabbit).